The following is a 731-amino-acid chain: 1,4-alpha-glucan branching enzyme GlgB 2 (731 aa).

The Nucleophile role is filled by aspartate 410. Glutamate 463 serves as the catalytic Proton donor.

It belongs to the glycosyl hydrolase 13 family. GlgB subfamily. Monomer.

It catalyses the reaction Transfers a segment of a (1-&gt;4)-alpha-D-glucan chain to a primary hydroxy group in a similar glucan chain.. It functions in the pathway glycan biosynthesis; glycogen biosynthesis. In terms of biological role, catalyzes the formation of the alpha-1,6-glucosidic linkages in glycogen by scission of a 1,4-alpha-linked oligosaccharide from growing alpha-1,4-glucan chains and the subsequent attachment of the oligosaccharide to the alpha-1,6 position. This is 1,4-alpha-glucan branching enzyme GlgB 2 from Xanthomonas oryzae pv. oryzae (strain MAFF 311018).